A 675-amino-acid polypeptide reads, in one-letter code: Polyphosphate kinase (675 aa).

Asn42 lines the ATP pocket. Mg(2+) contacts are provided by Arg372 and Arg401. The Phosphohistidine intermediate role is filled by His431. ATP-binding residues include Tyr464, Arg558, and His586.

The protein belongs to the polyphosphate kinase 1 (PPK1) family. It depends on Mg(2+) as a cofactor. An intermediate of this reaction is the autophosphorylated ppk in which a phosphate is covalently linked to a histidine residue through a N-P bond.

It catalyses the reaction [phosphate](n) + ATP = [phosphate](n+1) + ADP. In terms of biological role, catalyzes the reversible transfer of the terminal phosphate of ATP to form a long-chain polyphosphate (polyP). In Helicobacter pylori (strain ATCC 700392 / 26695) (Campylobacter pylori), this protein is Polyphosphate kinase.